A 476-amino-acid polypeptide reads, in one-letter code: Aspartyl/glutamyl-tRNA(Asn/Gln) amidotransferase subunit B (476 aa).

The protein belongs to the GatB/GatE family. GatB subfamily. As to quaternary structure, heterotrimer of A, B and C subunits.

The enzyme catalyses L-glutamyl-tRNA(Gln) + L-glutamine + ATP + H2O = L-glutaminyl-tRNA(Gln) + L-glutamate + ADP + phosphate + H(+). It catalyses the reaction L-aspartyl-tRNA(Asn) + L-glutamine + ATP + H2O = L-asparaginyl-tRNA(Asn) + L-glutamate + ADP + phosphate + 2 H(+). Functionally, allows the formation of correctly charged Asn-tRNA(Asn) or Gln-tRNA(Gln) through the transamidation of misacylated Asp-tRNA(Asn) or Glu-tRNA(Gln) in organisms which lack either or both of asparaginyl-tRNA or glutaminyl-tRNA synthetases. The reaction takes place in the presence of glutamine and ATP through an activated phospho-Asp-tRNA(Asn) or phospho-Glu-tRNA(Gln). This Neisseria meningitidis serogroup B (strain ATCC BAA-335 / MC58) protein is Aspartyl/glutamyl-tRNA(Asn/Gln) amidotransferase subunit B.